Consider the following 423-residue polypeptide: MALASGPALRALAGSGRLGLGGYGTPKRGAYEWGVRSTRKPEPRPLDRVYEIPGLEPITYEGKKHFVPWLARPIFPPWERGWNDPRFHRAAPIHEQTLYKEEPCYIFHQRCRLLEGMKQALWLTKTKLIEGLPKKVLSLVDDPANHIENQEQRVLDIISHARLWHSTEDIPKRETYCPLIVDSLIQLCKSQILKHPSLARRTSAQNCTLATTWNRESLLLQVRGTSSTILSAKDPLPVIASREEVEATRSHVLETFYPISPTIDLQECHVYEVKDDTGFQEGYPYPHPHTLYFLEKANLRPQRFLPEQLRAKMLLFAFANALAQARLLYGNTAKVLEQPIVVQSVGTDGRVFQFLVLQLNTTDLASSEGVKNLVWTDSDQLLYRHFWCRPVIKKKVVVEPVGPVDFQPETFRKFLALYLHGVV.

Residues 1 to 29 (MALASGPALRALAGSGRLGLGGYGTPKRG) constitute a mitochondrion transit peptide.

The protein belongs to the mitochondrion-specific ribosomal protein mL37 family. As to quaternary structure, component of the mitochondrial ribosome large subunit (39S) which comprises a 16S rRNA and about 50 distinct proteins.

It is found in the mitochondrion. This Mus musculus (Mouse) protein is Large ribosomal subunit protein mL37 (Mrpl37).